A 182-amino-acid chain; its full sequence is pEARLI1-like lipid transfer protein 2 (182 aa).

The N-terminal stretch at 1–25 (MASKNSASLALFFALNILFFTLTAG) is a signal peptide. A compositionally biased stretch (pro residues) spans 33-92 (SPKPRPLPNPKVPSPKVPTPSVPSPYVPTPSVPSPSVPTPSVPSPSVPSPNPTPVIPPRT). Residues 33-94 (SPKPRPLPNP…TPVIPPRTPG (62 aa)) form a disordered region. 7 tandem repeats follow at residues 42-46 (PKVPS), 47-51 (PKVPT), 52-56 (PSVPS), 62-66 (PSVPS), 67-71 (PSVPT), 72-76 (PSVPS), and 77-81 (PSVPS). The 7 X 5 AA repeats of P-[KS]-V-P-[ST] stretch occupies residues 42–81 (PKVPSPKVPTPSVPSPYVPTPSVPSPSVPTPSVPSPSVPS).

It belongs to the plant LTP family. PEARLI1 subfamily.

The protein localises to the secreted. It localises to the cell wall. Its function is as follows. Probable lipid transfer protein (LTP). May improve freezing survival. Seems to control the flowering process and lignin synthesis. Confers resistance to Botrytis cinerea. The polypeptide is pEARLI1-like lipid transfer protein 2 (Arabidopsis thaliana (Mouse-ear cress)).